The primary structure comprises 197 residues: Allatostatins (197 aa).

The first 27 residues, 1 to 27, serve as a signal peptide directing secretion; sequence MRSRTSVLTSSLAFLYFFGIVGRSALA. Residues 28-56 constitute a propeptide that is removed on maturation; sequence MEETPASSMNLQHYNNMLNPMVFDDTMPE. Isoleucine 76 carries the isoleucine amide modification. A propeptide spanning residues 80–86 is cleaved from the precursor; sequence WIDTNDN. Residues leucine 96, leucine 106, leucine 154, and leucine 184 each carry the leucine amide modification. The interval 161-197 is disordered; that stretch reads YSGGQPLGSKRPNDMLSQRYHFGLGKRMSEDEEESSQ. The propeptide occupies 188-197; sequence MSEDEEESSQ.

The protein belongs to the allatostatin family.

It localises to the secreted. Functionally, neuropeptides. This chain is Allatostatins, found in Apis mellifera (Honeybee).